The primary structure comprises 305 residues: tRNA pseudouridine synthase B (305 aa).

D48 acts as the Nucleophile in catalysis.

This sequence belongs to the pseudouridine synthase TruB family. Type 1 subfamily.

The enzyme catalyses uridine(55) in tRNA = pseudouridine(55) in tRNA. Responsible for synthesis of pseudouridine from uracil-55 in the psi GC loop of transfer RNAs. This chain is tRNA pseudouridine synthase B, found in Actinobacillus pleuropneumoniae serotype 5b (strain L20).